The chain runs to 614 residues: Zinc finger protein 276 (614 aa).

The segment at 1–46 (MKRDRLGRFLSPGIARQRGGSGGGCGSGRTRGRPSRSGGTSADGAA) is disordered. The span at 19-29 (GGSGGGCGSGR) shows a compositional bias: gly residues. Positions 78 to 164 (GHCRLCHGKF…LQRVNVSPAG (87 aa)) constitute a ZAD domain. Positions 80, 83, 137, and 140 each coordinate Zn(2+). A disordered region spans residues 271–422 (RLAQNSESNP…PGPKPGWKKK (152 aa)). Composition is skewed to polar residues over residues 272–282 (LAQNSESNPTG) and 291–302 (RETQVGSETKTL). Acidic residues predominate over residues 357–369 (SDLSEGDFLSEDE). Basic and acidic residues predominate over residues 386 to 408 (YPEKKVSGKKSEGREAKRPEEPK). Basic residues predominate over residues 409–422 (IRKKPGPKPGWKKK). 5 consecutive C2H2-type zinc fingers follow at residues 434–458 (YKCPYQGCTAVYRGADGMKKHIKEH), 465–490 (RPCPHPGCNKVFMIDRYLQRHVKLIH), 496–518 (YICDECGQTFKQRKHLLVHQMRH), 524–546 (LQCEVCGFQCRQRASLKYHMTKH), and 554–577 (FACDQCGRRFEKAHNLNVHMSMVH). The segment at 588–614 (PLEAEPPPGPLSPSGTMEGQAVKPEPT) is disordered.

In terms of tissue distribution, found in all the examined tissues, with highest levels in kidney, liver, lung, and spleen.

The protein localises to the nucleus. It is found in the chromosome. Its subcellular location is the centromere. It localises to the kinetochore. Functionally, may be involved in transcriptional regulation. This Mus musculus (Mouse) protein is Zinc finger protein 276 (Znf276).